The following is a 331-amino-acid chain: MDGNHSGGLGLVGDIGGTNARFALVEFDGQDPRLIEPTAYRGEDYGTAEDAIEEYLRKVGVKHPDQAVVAVAGPIDHGQVHMTNLDWRISEDGLRRAGGFRNAKLINDFTAQALAAPRVGPKDLRQIGELPTSGEGDLAILGPGTGFGVAGLVRRHGQEIPLATEGGHVAFAPVDDVEIEVLRALTRRLDGGRVSVERILSGPGMEDLHVDLAAAEGRGVEALTAKQITERAVEGCADSLATVNRFCAILGSTAGDIALTLGARGGVFIAGGIAPRIIDILEKSPFRERFDSKGRLSGFTRSIPTHVILHPHTALIGAAVALTPEGRAAVS.

13–18 (GDIGGT) lines the ATP pocket.

Belongs to the bacterial glucokinase family.

Its subcellular location is the cytoplasm. It carries out the reaction D-glucose + ATP = D-glucose 6-phosphate + ADP + H(+). The protein is Glucokinase of Caulobacter vibrioides (strain ATCC 19089 / CIP 103742 / CB 15) (Caulobacter crescentus).